The following is a 329-amino-acid chain: MQGSVTEFLKPRLVDIEQVNPTRAKVTLEPLERGFGHTLGNALRRILLSSMPGCAVTEVEIDGVLHEYSSKEGVQEDILEILLNLKGLAVVIEGKDEAMLTLSKSGAGPVTAADITHDGDVTIMNPDHVICHLTGNNDISMRIRVERGRGYVPASARAQTEDDDRPIGRLLVDSSFSPVARIAYNVEAARVEQRTDLDKLVIDMTTNGTIDPEEAIRRSATILAEQLDAFVELRDVTEPEQKEEKPEFDPILLRPVDDLELTVRSANCLKAEAIHYIGDLVQRTEVELLKTPNLGKKSLTEIKDVLASRGLSLGMRLENWPPASLADDL.

The alpha N-terminal domain (alpha-NTD) stretch occupies residues 1 to 234 (MQGSVTEFLK…EQLDAFVELR (234 aa)). Residues 248 to 329 (FDPILLRPVD…WPPASLADDL (82 aa)) form an alpha C-terminal domain (alpha-CTD) region.

The protein belongs to the RNA polymerase alpha chain family. Homodimer. The RNAP catalytic core consists of 2 alpha, 1 beta, 1 beta' and 1 omega subunit. When a sigma factor is associated with the core the holoenzyme is formed, which can initiate transcription.

The enzyme catalyses RNA(n) + a ribonucleoside 5'-triphosphate = RNA(n+1) + diphosphate. Its function is as follows. DNA-dependent RNA polymerase catalyzes the transcription of DNA into RNA using the four ribonucleoside triphosphates as substrates. This Shewanella loihica (strain ATCC BAA-1088 / PV-4) protein is DNA-directed RNA polymerase subunit alpha.